A 691-amino-acid chain; its full sequence is ATP-dependent RNA helicase MRH4, mitochondrial (691 aa).

A mitochondrion-targeting transit peptide spans 1-31 (MLIGQVSRLSAIPPLALQHTLRPLHSSSVLA). A disordered region spans residues 31-148 (AAGGKRPKQS…ATMPPNLTPR (118 aa)). A compositionally biased stretch (polar residues) spans 39-49 (QSPSHSRNSPR). Residues 50 to 68 (QKPDWEKRGSNRGRSEQPR) are compositionally biased toward basic and acidic residues. The segment covering 94–103 (SDSSSGSSAS) has biased composition (low complexity). Polar residues predominate over residues 111–126 (VPTSSRRLLPFSSSDT). Positions 183–213 (RTFDDFGLEEGLVKSLKGLYGEDGKTTPIET) match the Q motif motif. The Helicase ATP-binding domain occupies 225-433 (ASAPIGSQRV…TTNPFFTKKE (209 aa)). ATP is bound at residue 238–245 (AETGSGKT). The DEAD box motif lies at 382–385 (DEAD). One can recognise a Helicase C-terminal domain in the interval 474–691 (TLAEDAKAAK…VGAMGKRVRT (218 aa)). The interval 644-667 (LGEGAKNNKGGKGQGPLKKDGKTA) is disordered.

Belongs to the DEAD box helicase family. MRH4 subfamily.

The protein localises to the mitochondrion. It carries out the reaction ATP + H2O = ADP + phosphate + H(+). Functionally, ATP-binding RNA helicase involved in mitochondrial RNA metabolism. Required for maintenance of mitochondrial DNA. This Cryptococcus neoformans var. neoformans serotype D (strain JEC21 / ATCC MYA-565) (Filobasidiella neoformans) protein is ATP-dependent RNA helicase MRH4, mitochondrial (MRH4).